The sequence spans 302 residues: Oxygen-dependent coproporphyrinogen-III oxidase (302 aa).

Ser-94 is a substrate binding site. The a divalent metal cation site is built by His-98 and His-108. His-108 serves as the catalytic Proton donor. Residue 110 to 112 (NVR) participates in substrate binding. A divalent metal cation-binding residues include His-147 and His-177. The tract at residues 242–277 (YVEFNLVWDRGTLFGLQTGGRTESILMSMPPLVRWE) is important for dimerization. 260 to 262 (GGR) serves as a coordination point for substrate.

Belongs to the aerobic coproporphyrinogen-III oxidase family. As to quaternary structure, homodimer. Requires a divalent metal cation as cofactor.

The protein resides in the cytoplasm. It carries out the reaction coproporphyrinogen III + O2 + 2 H(+) = protoporphyrinogen IX + 2 CO2 + 2 H2O. It functions in the pathway porphyrin-containing compound metabolism; protoporphyrin-IX biosynthesis; protoporphyrinogen-IX from coproporphyrinogen-III (O2 route): step 1/1. In terms of biological role, involved in the heme biosynthesis. Catalyzes the aerobic oxidative decarboxylation of propionate groups of rings A and B of coproporphyrinogen-III to yield the vinyl groups in protoporphyrinogen-IX. The protein is Oxygen-dependent coproporphyrinogen-III oxidase of Erwinia tasmaniensis (strain DSM 17950 / CFBP 7177 / CIP 109463 / NCPPB 4357 / Et1/99).